The following is a 355-amino-acid chain: Histidinol-phosphate aminotransferase (355 aa).

Residue K214 is modified to N6-(pyridoxal phosphate)lysine.

This sequence belongs to the class-II pyridoxal-phosphate-dependent aminotransferase family. Histidinol-phosphate aminotransferase subfamily. Homodimer. The cofactor is pyridoxal 5'-phosphate.

It carries out the reaction L-histidinol phosphate + 2-oxoglutarate = 3-(imidazol-4-yl)-2-oxopropyl phosphate + L-glutamate. The protein operates within amino-acid biosynthesis; L-histidine biosynthesis; L-histidine from 5-phospho-alpha-D-ribose 1-diphosphate: step 7/9. This is Histidinol-phosphate aminotransferase (hisC) from Buchnera aphidicola subsp. Schizaphis graminum (strain Sg).